The primary structure comprises 346 residues: Dimethyladenosine transferase 1, mitochondrial (346 aa).

The transit peptide at Met1–Leu27 directs the protein to the mitochondrion. S-adenosyl-L-methionine-binding residues include Leu38, Gly63, Glu85, Lys86, Asp111, Val112, and Asn141.

Belongs to the class I-like SAM-binding methyltransferase superfamily. rRNA adenine N(6)-methyltransferase family. KsgA subfamily. Interacts with mitochondrial RNA polymerase POLRMT. Interacts with TFAM. Bound to the maturing mtSSU until the late stages of assembly. Ubiquitously expressed.

It is found in the mitochondrion. It catalyses the reaction adenosine(N)/adenosine(N+1) in rRNA + 4 S-adenosyl-L-methionine = N(6)-dimethyladenosine(N)/N(6)-dimethyladenosine(N+1) in rRNA + 4 S-adenosyl-L-homocysteine + 4 H(+). Functionally, mitochondrial methyltransferase which uses S-adenosyl methionine to dimethylate two highly conserved adjacent adenosine residues (A1583 and A1584) within the loop of helix 45 at the 3-prime end of 12S rRNA, thereby regulating the assembly or stability of the small subunit of the mitochondrial ribosome. Also required for basal transcription of mitochondrial DNA, probably via its interaction with POLRMT and TFAM. Stimulates transcription independently of the methyltransferase activity. The protein is Dimethyladenosine transferase 1, mitochondrial of Homo sapiens (Human).